The following is a 964-amino-acid chain: Isoleucine--tRNA ligase (964 aa).

The 'HIGH' region signature appears at 66–76 (PYANGDIHIGH). Position 596 (Glu-596) interacts with L-isoleucyl-5'-AMP. A 'KMSKS' region motif is present at residues 637–641 (KMSKS). Lys-640 is a binding site for ATP. Residues Cys-927, Cys-930, Cys-947, and Cys-950 each coordinate Zn(2+).

This sequence belongs to the class-I aminoacyl-tRNA synthetase family. IleS type 1 subfamily. In terms of assembly, monomer. The cofactor is Zn(2+).

It is found in the cytoplasm. The catalysed reaction is tRNA(Ile) + L-isoleucine + ATP = L-isoleucyl-tRNA(Ile) + AMP + diphosphate. Catalyzes the attachment of isoleucine to tRNA(Ile). As IleRS can inadvertently accommodate and process structurally similar amino acids such as valine, to avoid such errors it has two additional distinct tRNA(Ile)-dependent editing activities. One activity is designated as 'pretransfer' editing and involves the hydrolysis of activated Val-AMP. The other activity is designated 'posttransfer' editing and involves deacylation of mischarged Val-tRNA(Ile). The polypeptide is Isoleucine--tRNA ligase (Cupriavidus necator (strain ATCC 17699 / DSM 428 / KCTC 22496 / NCIMB 10442 / H16 / Stanier 337) (Ralstonia eutropha)).